A 294-amino-acid chain; its full sequence is 4-diphosphocytidyl-2-C-methyl-D-erythritol kinase (294 aa).

Residue lysine 23 is part of the active site. An ATP-binding site is contributed by 106–116; it reads PMGGGLGGGSS. Aspartate 148 is a catalytic residue.

The protein belongs to the GHMP kinase family. IspE subfamily.

It carries out the reaction 4-CDP-2-C-methyl-D-erythritol + ATP = 4-CDP-2-C-methyl-D-erythritol 2-phosphate + ADP + H(+). It participates in isoprenoid biosynthesis; isopentenyl diphosphate biosynthesis via DXP pathway; isopentenyl diphosphate from 1-deoxy-D-xylulose 5-phosphate: step 3/6. Functionally, catalyzes the phosphorylation of the position 2 hydroxy group of 4-diphosphocytidyl-2C-methyl-D-erythritol. The chain is 4-diphosphocytidyl-2-C-methyl-D-erythritol kinase from Nitrosospira multiformis (strain ATCC 25196 / NCIMB 11849 / C 71).